The following is an 85-amino-acid chain: Large ribosomal subunit protein bL27 (85 aa).

Residues 1 to 10 (MAQKKGGGST) are compositionally biased toward gly residues. The tract at residues 1 to 21 (MAQKKGGGSTRNGRDSQPKML) is disordered.

This sequence belongs to the bacterial ribosomal protein bL27 family.

This Leptothrix cholodnii (strain ATCC 51168 / LMG 8142 / SP-6) (Leptothrix discophora (strain SP-6)) protein is Large ribosomal subunit protein bL27.